The primary structure comprises 424 residues: Riboflavin biosynthesis protein RibBA (424 aa).

Residues 1 to 204 (MTRFDSIERA…IADLIAWRRK (204 aa)) are DHBP synthase. Residues 28–29 (RE), Asp33, 141–145 (RPGHT), and Glu165 each bind D-ribulose 5-phosphate. Residue Glu29 coordinates Mg(2+). His144 is a binding site for Mg(2+). A GTP cyclohydrolase II region spans residues 205 to 424 (HEKHVLRIAE…QNTAQPGTAL (220 aa)). 259 to 263 (RVHSE) contributes to the GTP binding site. Zn(2+) is bound by residues Cys264, Cys275, and Cys277. Residues Gln280, 303–305 (EGR), and Thr325 contribute to the GTP site. The active-site Proton acceptor; for GTP cyclohydrolase activity is Asp337. Catalysis depends on Arg339, which acts as the Nucleophile; for GTP cyclohydrolase activity. GTP is bound by residues Thr360 and Lys365.

It in the N-terminal section; belongs to the DHBP synthase family. In the C-terminal section; belongs to the GTP cyclohydrolase II family. Mg(2+) serves as cofactor. It depends on Mn(2+) as a cofactor. The cofactor is Zn(2+).

It catalyses the reaction D-ribulose 5-phosphate = (2S)-2-hydroxy-3-oxobutyl phosphate + formate + H(+). The catalysed reaction is GTP + 4 H2O = 2,5-diamino-6-hydroxy-4-(5-phosphoribosylamino)-pyrimidine + formate + 2 phosphate + 3 H(+). Its pathway is cofactor biosynthesis; riboflavin biosynthesis; 2-hydroxy-3-oxobutyl phosphate from D-ribulose 5-phosphate: step 1/1. It functions in the pathway cofactor biosynthesis; riboflavin biosynthesis; 5-amino-6-(D-ribitylamino)uracil from GTP: step 1/4. Catalyzes the conversion of D-ribulose 5-phosphate to formate and 3,4-dihydroxy-2-butanone 4-phosphate. Functionally, catalyzes the conversion of GTP to 2,5-diamino-6-ribosylamino-4(3H)-pyrimidinone 5'-phosphate (DARP), formate and pyrophosphate. The protein is Riboflavin biosynthesis protein RibBA of Rhodococcus erythropolis (strain PR4 / NBRC 100887).